The primary structure comprises 170 residues: Mitotic-spindle organizing protein 2B (170 aa).

Disordered stretches follow at residues 1-26 (MSRG…SPDA) and 102-170 (SADS…GSST). Over residues 8 to 20 (GSQAMASSQAAGP) the composition is skewed to low complexity. Positions 123–132 (PNPTTSTTQG) are enriched in polar residues. Residues 151 to 170 (SGSRMQKSSSSGKSSGGSST) are compositionally biased toward low complexity.

The protein belongs to the MOZART2 family. In terms of assembly, part of the gamma-tubulin complex. Interacts with TUBG1.

It localises to the cytoplasm. It is found in the cytoskeleton. The protein localises to the microtubule organizing center. The protein resides in the centrosome. Its subcellular location is the spindle. The sequence is that of Mitotic-spindle organizing protein 2B (mzt2b) from Xenopus tropicalis (Western clawed frog).